Consider the following 232-residue polypeptide: tRNA (guanine-N(1)-)-methyltransferase (232 aa).

Residues Gly-111 and 131–136 each bind S-adenosyl-L-methionine; that span reads IGDYIL.

This sequence belongs to the RNA methyltransferase TrmD family. Homodimer.

The protein resides in the cytoplasm. It carries out the reaction guanosine(37) in tRNA + S-adenosyl-L-methionine = N(1)-methylguanosine(37) in tRNA + S-adenosyl-L-homocysteine + H(+). Its function is as follows. Specifically methylates guanosine-37 in various tRNAs. This is tRNA (guanine-N(1)-)-methyltransferase from Bartonella tribocorum (strain CIP 105476 / IBS 506).